The primary structure comprises 214 residues: Adenylate kinase (214 aa).

Residue 10 to 15 coordinates ATP; sequence GAGKGT. The NMP stretch occupies residues 30–59; the sequence is STGDMLRAAVKAGTPLGLEAKKVMDAGQLV. AMP is bound by residues T31, R36, 57 to 59, 85 to 88, and Q92; these read QLV and GFPR. Residues 122-159 form an LID region; that stretch reads GRRVHPGSGRVYHIVFNQPKVEGKDDVTGEDLAIRPDD. Residues R123 and 132–133 each bind ATP; that span reads VY. R156 and R167 together coordinate AMP. Position 200 (Q200) interacts with ATP.

The protein belongs to the adenylate kinase family. In terms of assembly, monomer.

It is found in the cytoplasm. The enzyme catalyses AMP + ATP = 2 ADP. The protein operates within purine metabolism; AMP biosynthesis via salvage pathway; AMP from ADP: step 1/1. In terms of biological role, catalyzes the reversible transfer of the terminal phosphate group between ATP and AMP. Plays an important role in cellular energy homeostasis and in adenine nucleotide metabolism. This is Adenylate kinase from Shewanella halifaxensis (strain HAW-EB4).